The sequence spans 130 residues: Type VII secretion system extracellular protein C (130 aa).

The protein belongs to the EsxC family. In terms of assembly, forms both homodimers and heterodimers with EsxA. Homodimerization is calcium-dependent.

It localises to the secreted. In terms of biological role, implements its pathogenic function during infection. The protein is Type VII secretion system extracellular protein C of Staphylococcus aureus (strain Mu50 / ATCC 700699).